We begin with the raw amino-acid sequence, 198 residues long: MTLRCLEPSGNGAEGTQSQWGTSGSAEEPSPEAARLAKALRELSHTGWYWGSMTVNEAKEKLKEAPEGTFLIRDSSHSDYLLTISVKTSAGPTNLRIEYQDGKFRLDSIICVKSKLKQFDSVVHLIDYYVQMCKDKRTGPEAPRNGTVHLYLTKPLYTSAPPLQHLCRLTINKCTGTIWGLPLPTRLKDYLEEYKFQV.

Residues 1 to 31 (MTLRCLEPSGNGAEGTQSQWGTSGSAEEPSP) are disordered. Residues 1-75 (MTLRCLEPSG…PEGTFLIRDS (75 aa)) form an interaction with AREL1 region. Residues 14–25 (EGTQSQWGTSGS) show a composition bias toward polar residues. Phosphoserine is present on residues serine 30 and serine 52. Residues 48 to 156 (WYWGSMTVNE…TVHLYLTKPL (109 aa)) enclose the SH2 domain. In terms of domain architecture, SOCS box spans 151–197 (YLTKPLYTSAPPLQHLCRLTINKCTGTIWGLPLPTRLKDYLEEYKFQ). Lysine 173 is covalently cross-linked (Glycyl lysine isopeptide (Lys-Gly) (interchain with G-Cter in ubiquitin)).

As to quaternary structure, substrate-recognition component of the ECS(SOCS2) complex, composed of SOCS2, CUL5, ELOB, ELOC and RNF7/RBX2. Interacts with IGF1R. Interacts with DCUN1D1. Ubiquitinated; mediated by AREL1 and leading to its subsequent proteasomal degradation. Ubiquitination is dependent on its phosphorylation at Ser-52, by PKC. Ubiquitination is stimulated by LPS. Post-translationally, phosphorylation at Ser-52 by PKC facilitates its ubiquitination and proteasomal degradation.

It is found in the cytoplasm. The protein operates within protein modification; protein ubiquitination. Functionally, substrate-recognition component of a cullin-5-RING E3 ubiquitin-protein ligase complex (ECS complex, also named CRL5 complex), which mediates the ubiquitination and subsequent proteasomal degradation of target proteins, such as EPOR and GHR. Specifically recognizes and binds phosphorylated proteins via its SH2 domain, promoting their ubiquitination. The ECS(SOCS2) complex acts as a key regulator of growth hormone receptor (GHR) levels by mediating ubiquitination and degradation of GHR, following GHR phosphorylation by JAK2. The ECS(SOCS2) also catalyzes ubiquitination and degradation of JAK2-phosphorylated EPOR. The protein is Suppressor of cytokine signaling 2 (SOCS2) of Sus scrofa (Pig).